The sequence spans 104 residues: Thioredoxin (104 aa).

Residues 2–104 form the Thioredoxin domain; that stretch reads AIVKVTDSNF…NLAEVIEKHL (103 aa). A disulfide bridge connects residues Cys-29 and Cys-32.

This sequence belongs to the thioredoxin family.

Its function is as follows. Component of the thioredoxin-thioredoxin reductase system. Participates in various redox reactions through the reversible oxidation of its active center dithiol to a disulfide and catalyzes dithiol-disulfide exchange reactions. This is Thioredoxin (trxA) from Staphylococcus saprophyticus subsp. saprophyticus (strain ATCC 15305 / DSM 20229 / NCIMB 8711 / NCTC 7292 / S-41).